The sequence spans 220 residues: Fructose-6-phosphate aldolase 1 (220 aa).

Lys-85 (schiff-base intermediate with substrate) is an active-site residue.

Belongs to the transaldolase family. Type 3A subfamily. Homodecamer.

It localises to the cytoplasm. It carries out the reaction beta-D-fructose 6-phosphate = dihydroxyacetone + D-glyceraldehyde 3-phosphate. In terms of biological role, catalyzes the reversible formation of fructose 6-phosphate from dihydroxyacetone and D-glyceraldehyde 3-phosphate via an aldolization reaction. This chain is Fructose-6-phosphate aldolase 1 (fsaA), found in Escherichia coli O6:H1 (strain CFT073 / ATCC 700928 / UPEC).